The sequence spans 550 residues: (+)-germacrene D synthase (550 aa).

Positions 304, 308, and 455 each coordinate Mg(2+). Positions 304–308 (DDIYD) match the DDXXD motif motif.

Belongs to the terpene synthase family. Tpsa subfamily. Mg(2+) serves as cofactor. It depends on Mn(2+) as a cofactor. The cofactor is Co(2+). Requires Ni(2+) as cofactor.

Its subcellular location is the cytoplasm. The enzyme catalyses (2E,6E)-farnesyl diphosphate = (+)-germacrene D + diphosphate. It participates in secondary metabolite biosynthesis; terpenoid biosynthesis. Involved in the biosynthesis of germacrene D. Can use farnesyl diphosphate as substrate, but not geranyl diphosphate. Produces mainly (+)-germacrene D along with germacrene B and a number of minor by-products. In Zingiber officinale (Ginger), this protein is (+)-germacrene D synthase.